Consider the following 208-residue polypeptide: Large ribosomal subunit protein uL3 (208 aa).

Residues 123–147 (RHGQSRGPMAHGSRYHRRPGSMGPV) are disordered.

Belongs to the universal ribosomal protein uL3 family. In terms of assembly, part of the 50S ribosomal subunit. Forms a cluster with proteins L14 and L19.

Its function is as follows. One of the primary rRNA binding proteins, it binds directly near the 3'-end of the 23S rRNA, where it nucleates assembly of the 50S subunit. This chain is Large ribosomal subunit protein uL3, found in Streptococcus gordonii (strain Challis / ATCC 35105 / BCRC 15272 / CH1 / DL1 / V288).